The following is a 120-amino-acid chain: UPF0231 protein KPN78578_01240 (120 aa).

Belongs to the UPF0231 family.

The protein is UPF0231 protein KPN78578_01240 of Klebsiella pneumoniae subsp. pneumoniae (strain ATCC 700721 / MGH 78578).